We begin with the raw amino-acid sequence, 170 residues long: Adenine phosphoribosyltransferase (170 aa).

The protein belongs to the purine/pyrimidine phosphoribosyltransferase family. In terms of assembly, homodimer.

It is found in the cytoplasm. The catalysed reaction is AMP + diphosphate = 5-phospho-alpha-D-ribose 1-diphosphate + adenine. It participates in purine metabolism; AMP biosynthesis via salvage pathway; AMP from adenine: step 1/1. In terms of biological role, catalyzes a salvage reaction resulting in the formation of AMP, that is energically less costly than de novo synthesis. This Geobacillus kaustophilus (strain HTA426) protein is Adenine phosphoribosyltransferase.